The chain runs to 434 residues: Tryptophan--tRNA ligase (434 aa).

Residues 14-16 (TTS) and 22-23 (GN) each bind ATP. The 'HIGH' region signature appears at 15-23 (TSGTPHLGN). L-tryptophan is bound at residue Asp147. Residues 159 to 161 (GRD), Leu199, and 206 to 210 (KMSKS) contribute to the ATP site. Residues 206 to 210 (KMSKS) carry the 'KMSKS' region motif.

It belongs to the class-I aminoacyl-tRNA synthetase family. Homodimer.

It is found in the cytoplasm. The enzyme catalyses tRNA(Trp) + L-tryptophan + ATP = L-tryptophyl-tRNA(Trp) + AMP + diphosphate + H(+). Its function is as follows. Catalyzes the attachment of tryptophan to tRNA(Trp). In Xylella fastidiosa (strain 9a5c), this protein is Tryptophan--tRNA ligase.